A 248-amino-acid polypeptide reads, in one-letter code: Probable septum site-determining protein MinC (248 aa).

The segment at 94–126 (GMPPAMRGGQPAADFEAPAGEPQANPGAPEPQI) is disordered.

Belongs to the MinC family. As to quaternary structure, interacts with MinD and FtsZ.

In terms of biological role, cell division inhibitor that blocks the formation of polar Z ring septums. Rapidly oscillates between the poles of the cell to destabilize FtsZ filaments that have formed before they mature into polar Z rings. Prevents FtsZ polymerization. This Brucella suis biovar 1 (strain 1330) protein is Probable septum site-determining protein MinC.